A 170-amino-acid chain; its full sequence is Adenine phosphoribosyltransferase (170 aa).

The protein belongs to the purine/pyrimidine phosphoribosyltransferase family. In terms of assembly, homodimer.

Its subcellular location is the cytoplasm. It carries out the reaction AMP + diphosphate = 5-phospho-alpha-D-ribose 1-diphosphate + adenine. It participates in purine metabolism; AMP biosynthesis via salvage pathway; AMP from adenine: step 1/1. Functionally, catalyzes a salvage reaction resulting in the formation of AMP, that is energically less costly than de novo synthesis. In Enterococcus faecalis (strain ATCC 700802 / V583), this protein is Adenine phosphoribosyltransferase.